We begin with the raw amino-acid sequence, 334 residues long: Iron-uptake system permease protein FeuB (334 aa).

Helical transmembrane passes span 9-29 (IILI…ILYG), 63-83 (AAGA…MQGI), 91-111 (PSIM…MVLL), 119-139 (MMIY…GLAA), 150-170 (LAII…AMSI), 191-211 (PDFL…AISL), 243-263 (VIIL…VGLV), 281-301 (PCSC…SRFI), and 305-325 (FETP…LYLI).

The protein belongs to the binding-protein-dependent transport system permease family. FecCD subfamily. As to quaternary structure, the complex is composed of one ATP-binding protein (YusV), two transmembrane proteins (FeuB and FeuC) and a solute-binding protein (FeuA).

It is found in the cell membrane. The protein resides in the membrane raft. In terms of biological role, involved in the uptake of iron. Probably responsible for the translocation of the substrate across the membrane. Functionally, part of the ABC transporter complex FeuABC/YusV involved in import of the catecholate siderophores bacillibactin and enterobactin. In Bacillus subtilis (strain 168), this protein is Iron-uptake system permease protein FeuB (feuB).